The primary structure comprises 75 residues: UPF0270 protein PSPTO_1630 (75 aa).

Belongs to the UPF0270 family.

The polypeptide is UPF0270 protein PSPTO_1630 (Pseudomonas syringae pv. tomato (strain ATCC BAA-871 / DC3000)).